The chain runs to 318 residues: Acetyl-coenzyme A carboxylase carboxyl transferase subunit alpha (318 aa).

The CoA carboxyltransferase C-terminal domain maps to 39–297 (RLEKRSQTAL…SEALKAMVGK (259 aa)).

The protein belongs to the AccA family. As to quaternary structure, acetyl-CoA carboxylase is a heterohexamer composed of biotin carboxyl carrier protein (AccB), biotin carboxylase (AccC) and two subunits each of ACCase subunit alpha (AccA) and ACCase subunit beta (AccD).

It localises to the cytoplasm. The enzyme catalyses N(6)-carboxybiotinyl-L-lysyl-[protein] + acetyl-CoA = N(6)-biotinyl-L-lysyl-[protein] + malonyl-CoA. Its pathway is lipid metabolism; malonyl-CoA biosynthesis; malonyl-CoA from acetyl-CoA: step 1/1. Component of the acetyl coenzyme A carboxylase (ACC) complex. First, biotin carboxylase catalyzes the carboxylation of biotin on its carrier protein (BCCP) and then the CO(2) group is transferred by the carboxyltransferase to acetyl-CoA to form malonyl-CoA. The protein is Acetyl-coenzyme A carboxylase carboxyl transferase subunit alpha of Bartonella tribocorum (strain CIP 105476 / IBS 506).